Consider the following 114-residue polypeptide: Large ribosomal subunit protein bL20c (114 aa).

The protein belongs to the bacterial ribosomal protein bL20 family.

It is found in the plastid. The protein localises to the chloroplast. Its function is as follows. Binds directly to 23S ribosomal RNA and is necessary for the in vitro assembly process of the 50S ribosomal subunit. It is not involved in the protein synthesizing functions of that subunit. This is Large ribosomal subunit protein bL20c (rpl20) from Trieres chinensis (Marine centric diatom).